The sequence spans 38 residues: Mu/omega-theraphotoxin-Mb1b (38 aa).

Cystine bridges form between C7/C21, C14/C26, and C20/C33. Position 38 is a serine amide (S38).

This sequence belongs to the neurotoxin 10 (Hwtx-1) family. 28 (Jztx-11) subfamily. Expressed by the venom gland.

Its subcellular location is the secreted. Paralytic toxin on insects that inhibits voltage-gated sodium (Nav) and calcium (Cav) channels in P.americana (American cockroach) dorsal unpaired median (DUM) neurons, and also inhibits the B.germanica (German cockroach) Nav channel (BgNaV1). May act as a gating-modifier toxin on Nav and as a pore blocker on Cav. In vivo, reversibly paralyzes both L.cuprina (Australian sheep blowfly) and M.domestica (housefly), but does not affect larvae of H.armigera (cotton bollworms). In Monocentropus balfouri (Socotra Island blue baboon tarantula), this protein is Mu/omega-theraphotoxin-Mb1b.